We begin with the raw amino-acid sequence, 374 residues long: Chaperone protein DnaJ (374 aa).

Residues 5–70 (DYYEVLGVAR…NKRRMYDSHG (66 aa)) enclose the J domain. Residues 130–207 (GVERRIEIPT…CHGNGRVEED (78 aa)) form a CR-type zinc finger. The Zn(2+) site is built by cysteine 143, cysteine 146, cysteine 159, cysteine 162, cysteine 181, cysteine 184, cysteine 195, and cysteine 198. CXXCXGXG motif repeat units follow at residues 143–150 (CGDCDGSG), 159–166 (CNVCHGRG), 181–188 (CHNCGGRG), and 195–202 (CKTCHGNG).

This sequence belongs to the DnaJ family. In terms of assembly, homodimer. Requires Zn(2+) as cofactor.

The protein resides in the cytoplasm. Functionally, participates actively in the response to hyperosmotic and heat shock by preventing the aggregation of stress-denatured proteins and by disaggregating proteins, also in an autonomous, DnaK-independent fashion. Unfolded proteins bind initially to DnaJ; upon interaction with the DnaJ-bound protein, DnaK hydrolyzes its bound ATP, resulting in the formation of a stable complex. GrpE releases ADP from DnaK; ATP binding to DnaK triggers the release of the substrate protein, thus completing the reaction cycle. Several rounds of ATP-dependent interactions between DnaJ, DnaK and GrpE are required for fully efficient folding. Also involved, together with DnaK and GrpE, in the DNA replication of plasmids through activation of initiation proteins. This chain is Chaperone protein DnaJ, found in Stenotrophomonas maltophilia (strain K279a).